A 300-amino-acid chain; its full sequence is Dihydroorotate dehydrogenase B (NAD(+)), catalytic subunit (300 aa).

FMN-binding positions include Ser-20 and 44–45 (KG). Substrate is bound by residues Lys-44 and 68–72 (NSVGL). Asn-98 and Asn-124 together coordinate FMN. Asn-124 contributes to the substrate binding site. Cys-127 serves as the catalytic Nucleophile. FMN is bound by residues Lys-162 and Ile-188. 189 to 190 (NT) provides a ligand contact to substrate. FMN is bound by residues Gly-214, 240–241 (GG), and 262–263 (GT).

It belongs to the dihydroorotate dehydrogenase family. Type 1 subfamily. In terms of assembly, heterotetramer of 2 PyrK and 2 PyrD type B subunits. FMN serves as cofactor.

Its subcellular location is the cytoplasm. It catalyses the reaction (S)-dihydroorotate + NAD(+) = orotate + NADH + H(+). It participates in pyrimidine metabolism; UMP biosynthesis via de novo pathway; orotate from (S)-dihydroorotate (NAD(+) route): step 1/1. In terms of biological role, catalyzes the conversion of dihydroorotate to orotate with NAD(+) as electron acceptor. This is Dihydroorotate dehydrogenase B (NAD(+)), catalytic subunit (pyrD) from Caldicellulosiruptor saccharolyticus (strain ATCC 43494 / DSM 8903 / Tp8T 6331).